The chain runs to 447 residues: Na(+)-translocating NADH-quinone reductase subunit A (447 aa).

The protein belongs to the NqrA family. In terms of assembly, composed of six subunits; NqrA, NqrB, NqrC, NqrD, NqrE and NqrF.

It carries out the reaction a ubiquinone + n Na(+)(in) + NADH + H(+) = a ubiquinol + n Na(+)(out) + NAD(+). NQR complex catalyzes the reduction of ubiquinone-1 to ubiquinol by two successive reactions, coupled with the transport of Na(+) ions from the cytoplasm to the periplasm. NqrA to NqrE are probably involved in the second step, the conversion of ubisemiquinone to ubiquinol. In Haemophilus influenzae (strain PittGG), this protein is Na(+)-translocating NADH-quinone reductase subunit A.